The primary structure comprises 27 residues: Superoxide dismutase [Mn] (27 aa).

It belongs to the iron/manganese superoxide dismutase family. As to quaternary structure, homodimer. Mn(2+) serves as cofactor.

The catalysed reaction is 2 superoxide + 2 H(+) = H2O2 + O2. Functionally, destroys superoxide anion radicals which are normally produced within the cells and which are toxic to biological systems. This is Superoxide dismutase [Mn] (sodA) from Desulfovibrio desulfuricans.